The primary structure comprises 148 residues: Large ribosomal subunit protein bL9 (148 aa).

Belongs to the bacterial ribosomal protein bL9 family.

Binds to the 23S rRNA. The polypeptide is Large ribosomal subunit protein bL9 (Frankia alni (strain DSM 45986 / CECT 9034 / ACN14a)).